The sequence spans 462 residues: Probable alcohol acetyltransferase crmB (462 aa).

It belongs to the alcohol acetyltransferase FCK4 family.

The protein operates within secondary metabolite biosynthesis. Functionally, probable alcohol acetyltransferase; part of the crm gene cluster that mediates the biosynthesis of a yet unidentified copper-responsive metabolite. In contrast to crmA, is not involved in the biosynthesis of fumivalines or fumicicolins. This is Probable alcohol acetyltransferase crmB from Aspergillus fumigatus (strain ATCC MYA-4609 / CBS 101355 / FGSC A1100 / Af293) (Neosartorya fumigata).